The chain runs to 499 residues: Probable dipeptidase B (499 aa).

Residue C26 is part of the active site.

It belongs to the peptidase C69 family.

It carries out the reaction an L-aminoacyl-L-amino acid + H2O = 2 an L-alpha-amino acid. In Streptococcus pyogenes serotype M18 (strain MGAS8232), this protein is Probable dipeptidase B (pepDB).